Here is a 439-residue protein sequence, read N- to C-terminus: MENQKNFLTTAPYKGTRDFYPEDMRLRNWMFSVMRETVLSFGYEEYDGPILESFDLYKAKSGEEIVERQLYDFIDKGERRVAIRPEMTPTLARMVAGNLRNLPKPVRWFSIPNLWRYEQPGKGRLREHWQLNVDLFGVDSHRAELEILLIADSILKKFGAPIGSYQIKVSHRKLLDSFLKNSLKLNGDQVHGVSKLLDKKSKISSEAFETEMKPFLNNFKEQFSLIETYLNSNLETVSKIPGIDTNSVSFIQNLFQELGELGIDKQLLFDPSIIRGFDYYTGCIFEVFDTNPENRRSLYGGGRYDNLIGLFSKEQLSGIGFGLGDVTLKNFLEGHNLIPNLSREKTIFLPIMDESLFVDTFKLSKELRENEILTETMLDSAKIGKQIQIAEKKGYRYVLFLGESEIRTETVQIKDLISGEQKSLPRKGLSDTLKKDFQL.

The protein belongs to the class-II aminoacyl-tRNA synthetase family. Homodimer.

It localises to the cytoplasm. It carries out the reaction tRNA(His) + L-histidine + ATP = L-histidyl-tRNA(His) + AMP + diphosphate + H(+). In Leptospira interrogans serogroup Icterohaemorrhagiae serovar copenhageni (strain Fiocruz L1-130), this protein is Histidine--tRNA ligase.